The following is a 330-amino-acid chain: Electron transfer flavoprotein subunit alpha (330 aa).

Residue 270-298 (LYIACGISGAIQHLAGMSNSGTIVAINKN) participates in FAD binding.

It belongs to the ETF alpha-subunit/FixB family. As to quaternary structure, heterodimer of an alpha and a beta subunit. It depends on FAD as a cofactor.

The electron transfer flavoprotein serves as a specific electron acceptor for other dehydrogenases. It transfers the electrons to the main respiratory chain via ETF-ubiquinone oxidoreductase (ETF dehydrogenase). This Thermoanaerobacterium thermosaccharolyticum (strain ATCC 7956 / DSM 571 / NCIMB 9385 / NCA 3814 / NCTC 13789 / WDCM 00135 / 2032) (Clostridium thermosaccharolyticum) protein is Electron transfer flavoprotein subunit alpha (etfA).